The sequence spans 317 residues: Apolipoprotein E (317 aa).

The N-terminal stretch at 1-18 (MKVLWAALLVTFLAGCQA) is a signal peptide. 8 tandem repeats follow at residues 80–101 (ALMD…EQLT), 102–123 (PVAE…ARLG), 124–145 (ADME…AMLG), 146–167 (QSTE…KRLL), 168–189 (RDAD…EGAE), 190–211 (RGVS…VRAA), 212–233 (TVGS…ERLR), and 234–255 (ARME…EQVA). Positions 80-255 (ALMDETMKEL…RLDEVKEQVA (176 aa)) are 8 X 22 AA approximate tandem repeats. Met143 carries the post-translational modification Methionine sulfoxide. Ser147 is subject to Phosphoserine. An LDL and other lipoprotein receptors binding region spans residues 158-168 (HLRKLRKRLLR). 162–165 (LRKR) contributes to the heparin binding site. The segment at 210-290 (AATVGSLAGQ…SWFEPLVEDM (81 aa)) is lipid-binding and lipoprotein association. 229-236 (GERLRARM) is a binding site for heparin. Residues 266–317 (QQIRLQAEAFQARLKSWFEPLVEDMQRQWAGLVEKVQAAMGTSAAPVPSDNH) are homooligomerization. Residues 278 to 290 (RLKSWFEPLVEDM) are specificity for association with VLDL.

Belongs to the apolipoprotein A1/A4/E family. As to quaternary structure, homotetramer. May interact with ABCA1; functionally associated with ABCA1 in the biogenesis of HDLs. May interact with APP/A4 amyloid-beta peptide; the interaction is extremely stable in vitro but its physiological significance is unclear. May interact with MAPT. May interact with MAP2. In the cerebrospinal fluid, interacts with secreted SORL1. Interacts with PMEL; this allows the loading of PMEL luminal fragment on ILVs to induce fibril nucleation. Post-translationally, APOE exists as multiple glycosylated and sialylated glycoforms within cells and in plasma. The extent of glycosylation and sialylation are tissue and context specific. In terms of processing, glycated in plasma VLDL. Phosphorylated by FAM20C in the extracellular medium.

The protein localises to the secreted. It is found in the extracellular space. The protein resides in the extracellular matrix. It localises to the extracellular vesicle. Its subcellular location is the endosome. The protein localises to the multivesicular body. In terms of biological role, APOE is an apolipoprotein, a protein associating with lipid particles, that mainly functions in lipoprotein-mediated lipid transport between organs via the plasma and interstitial fluids. APOE is a core component of plasma lipoproteins and is involved in their production, conversion and clearance. Apolipoproteins are amphipathic molecules that interact both with lipids of the lipoprotein particle core and the aqueous environment of the plasma. As such, APOE associates with chylomicrons, chylomicron remnants, very low density lipoproteins (VLDL) and intermediate density lipoproteins (IDL) but shows a preferential binding to high-density lipoproteins (HDL). It also binds a wide range of cellular receptors including the LDL receptor/LDLR, the LDL receptor-related proteins LRP1, LRP2 and LRP8 and the very low-density lipoprotein receptor/VLDLR that mediate the cellular uptake of the APOE-containing lipoprotein particles. Finally, APOE also has a heparin-binding activity and binds heparan-sulfate proteoglycans on the surface of cells, a property that supports the capture and the receptor-mediated uptake of APOE-containing lipoproteins by cells. A main function of APOE is to mediate lipoprotein clearance through the uptake of chylomicrons, VLDLs, and HDLs by hepatocytes. APOE is also involved in the biosynthesis by the liver of VLDLs as well as their uptake by peripheral tissues ensuring the delivery of triglycerides and energy storage in muscle, heart and adipose tissues. By participating in the lipoprotein-mediated distribution of lipids among tissues, APOE plays a critical role in plasma and tissues lipid homeostasis. APOE is also involved in two steps of reverse cholesterol transport, the HDLs-mediated transport of cholesterol from peripheral tissues to the liver, and thereby plays an important role in cholesterol homeostasis. First, it is functionally associated with ABCA1 in the biogenesis of HDLs in tissues. Second, it is enriched in circulating HDLs and mediates their uptake by hepatocytes. APOE also plays an important role in lipid transport in the central nervous system, regulating neuron survival and sprouting. In Gorilla gorilla gorilla (Western lowland gorilla), this protein is Apolipoprotein E (APOE).